A 265-amino-acid polypeptide reads, in one-letter code: Interleukin-2 receptor subunit alpha (265 aa).

The signal sequence occupies residues 1-21 (MDSYLLMWGLLTLIMVPGCFA). The Sushi 1 domain occupies 22 to 84 (ELCDDDPPEI…SWDNQCQCTS (63 aa)). Over 22-240 (ELCDDDPPEI…ETFIFTTEYQ (219 aa)) the chain is Extracellular. Intrachain disulfides connect Cys-24–Cys-67, Cys-49–Cys-80, and Cys-51–Cys-82. 2 N-linked (GlcNAc...) asparagine glycosylation sites follow: Asn-70 and Asn-89. The segment covering 87–98 (TRNTTKQVTPQP) has biased composition (polar residues). Residues 87–123 (TRNTTKQVTPQPEEQKERKTTEMQSPMQPVDQASLPG) are disordered. The 64-residue stretch at 123–186 (GHCREPPPWE…WTQPQLICTG (64 aa)) folds into the Sushi 2 domain. 2 disulfides stabilise this stretch: Cys-125/Cys-168 and Cys-152/Cys-184. The segment at 190 to 210 (TSQFPGEEKPQASPEGRPESE) is disordered. A compositionally biased stretch (basic and acidic residues) spans 195–209 (GEEKPQASPEGRPES). Residues 241 to 259 (VAVAGCVFLLISVLLLSGL) form a helical membrane-spanning segment. The Cytoplasmic segment spans residues 260–265 (TWQRRQ).

As to quaternary structure, non-covalent dimer of an alpha and a beta subunit. IL2R exists in 3 different forms: a high affinity dimer, an intermediate affinity monomer (beta subunit), and a low affinity monomer (alpha subunit). The high and intermediate affinity forms also associate with a gamma subunit.

It is found in the membrane. Receptor for interleukin-2. The receptor is involved in the regulation of immune tolerance by controlling regulatory T cells (TREGs) activity. TREGs suppress the activation and expansion of autoreactive T-cells. The sequence is that of Interleukin-2 receptor subunit alpha (IL2RA) from Pan troglodytes (Chimpanzee).